Consider the following 129-residue polypeptide: Class I hydrophobin 11 (129 aa).

The first 19 residues, Met1–Ala19, serve as a signal peptide directing secretion. Cystine bridges form between Cys48–Cys106, Cys55–Cys100, Cys56–Cys89, and Cys107–Cys122.

This sequence belongs to the fungal hydrophobin family. As to quaternary structure, self-assembles to form functional amyloid fibrils called rodlets. Self-assembly into fibrillar rodlets occurs spontaneously at hydrophobic:hydrophilic interfaces and the rodlets further associate laterally to form amphipathic monolayers.

The protein resides in the secreted. The protein localises to the cell wall. In terms of biological role, aerial growth, conidiation, and dispersal of filamentous fungi in the environment rely upon a capability of their secreting small amphipathic proteins called hydrophobins (HPBs) with low sequence identity. Class I can self-assemble into an outermost layer of rodlet bundles on aerial cell surfaces, conferring cellular hydrophobicity that supports fungal growth, development and dispersal; whereas Class II form highly ordered films at water-air interfaces through intermolecular interactions but contribute nothing to the rodlet structure. The protein is Class I hydrophobin 11 of Pleurotus ostreatus (strain PC15) (Oyster mushroom).